A 360-amino-acid chain; its full sequence is Popeye domain-containing protein 1 (360 aa).

Residues methionine 1 to alanine 48 are Extracellular-facing. Residues asparagine 2 and asparagine 30 are each glycosylated (N-linked (GlcNAc...) asparagine). A helical membrane pass occupies residues asparagine 49 to leucine 69. Arginine 70 is a topological domain (cytoplasmic). A helical transmembrane segment spans residues glycine 71–leucine 91. Residue aspartate 92 is a topological domain, extracellular. Residues isoleucine 93 to tyrosine 113 form a helical membrane-spanning segment. Positions isoleucine 93–lysine 115 are required for interaction with CAV3. The Cytoplasmic portion of the chain corresponds to lysine 114 to proline 360. A required for interaction with KCNK2 region spans residues arginine 136 to arginine 186. Phosphoserine is present on residues serine 295 and serine 318. The interval serine 317–proline 360 is disordered. Residues glutamate 337 to phenylalanine 346 are compositionally biased toward acidic residues. The span at serine 350–proline 360 shows a compositional bias: polar residues.

The protein belongs to the popeye family. Homodimer. Homodimerization requires the C-terminus cytoplasmic region. Interacts (via the C-terminus cytoplasmic tail) with TJP1. Interacts (via the C-terminus cytoplasmic tail) with ARHGEF25/GEFT (via the DH domain). Interacts (via the C-terminus cytoplasmic tail) with VAMP3. Interacts with KCNK2; the interaction enhances KCNK2 surface expression and is inhibited by cAMP. Interacts with CAV3. In terms of tissue distribution, expressed in epithelial cells (at protein level). Expressed in fetal and adult heart and skeletal muscle.

Its subcellular location is the lateral cell membrane. The protein localises to the cell junction. The protein resides in the tight junction. It localises to the membrane. It is found in the cell membrane. Its subcellular location is the sarcolemma. The protein localises to the caveola. Functionally, cell adhesion molecule involved in the establishment and/or maintenance of cell integrity. Involved in the formation and regulation of the tight junction (TJ) paracellular permeability barrier in epithelial cells. Plays a role in VAMP3-mediated vesicular transport and recycling of different receptor molecules through its interaction with VAMP3. Plays a role in the regulation of cell shape and movement by modulating the Rho-family GTPase activity through its interaction with ARHGEF25/GEFT. Induces primordial adhesive contact and aggregation of epithelial cells in a Ca(2+)-independent manner. Also involved in striated muscle regeneration and repair and in the regulation of cell spreading. Important for the maintenance of cardiac function. Plays a regulatory function in heart rate dynamics mediated, at least in part, through cAMP-binding and, probably, by increasing cell surface expression of the potassium channel KCNK2 and enhancing current density. Is also a caveolae-associated protein important for the preservation of caveolae structural and functional integrity as well as for heart protection against ischemia injury. In Homo sapiens (Human), this protein is Popeye domain-containing protein 1.